A 112-amino-acid chain; its full sequence is UPF0102 protein THEYE_A1950 (112 aa).

The protein belongs to the UPF0102 family.

This Thermodesulfovibrio yellowstonii (strain ATCC 51303 / DSM 11347 / YP87) protein is UPF0102 protein THEYE_A1950.